The sequence spans 330 residues: G-protein coupled bile acid receptor 1 (330 aa).

Residues 1–19 are Extracellular-facing; it reads MTPNSTGEVPGPIPRGALE. Residue N4 is glycosylated (N-linked (GlcNAc...) asparagine). The chain crosses the membrane as a helical span at residues 20-40; the sequence is LSLALASLIIAANLLLALGIA. The Cytoplasmic segment spans residues 41-50; it reads CDRRLRSPPA. Residues 51–71 form a helical membrane-spanning segment; it reads GCFFLSLLLAGLLTGLALPTL. The Extracellular segment spans residues 72 to 85; sequence PGLWRQSHRGYWSC. A disulfide bond links C85 and C155. A helical transmembrane segment spans residues 86–106; the sequence is LLVYLAPNFSFLSLLANLLLV. The Cytoplasmic portion of the chain corresponds to 107-125; it reads HGERYVAVLRPLQPPGSIR. The chain crosses the membrane as a helical span at residues 126-146; sequence LALLLTWTGPLLFASLPALGW. At 147–169 the chain is on the extracellular side; it reads NHWGPEANCSSQTIFPAPYLYLE. N154 is a glycosylation site (N-linked (GlcNAc...) asparagine). The chain crosses the membrane as a helical span at residues 170 to 190; that stretch reads VYGLLLPAVGAAALLSAHVLL. Topologically, residues 191 to 230 are cytoplasmic; sequence AAHRQLQDIRRLERAVCRDAPSALARALTWRQARAQAGAT. The helical transmembrane segment at 231–251 threads the bilayer; sequence LLFGLCWGPYVATLFLSVLAY. The Extracellular segment spans residues 252-261; it reads EQRPPLGPGT. A helical transmembrane segment spans residues 262-282; it reads LLSLLSLGSASAAAVPVAMGL. Topologically, residues 283–330 are cytoplasmic; it reads GDHRYTAPWRAAARRWLRGLRGRGSQASPGPSTAYHTSSQSSVDVDLN. Residues 304–330 are disordered; it reads GRGSQASPGPSTAYHTSSQSSVDVDLN. The span at 307 to 330 shows a compositional bias: polar residues; the sequence is SQASPGPSTAYHTSSQSSVDVDLN.

Belongs to the G-protein coupled receptor 1 family. Expressed at high level in spleen. Expressed at lower level in thymus, heart, lung, liver, kidney, ileum, blood and adherent alveolar macrophage cells.

It localises to the cell membrane. In terms of biological role, receptor for bile acid. Bile-acid binding induces its internalization, activation of extracellular signal-regulated kinase and intracellular cAMP production. May be involved in the suppression of macrophage functions by bile acids. Involved in bile acid promoted GLP1R secretion. The polypeptide is G-protein coupled bile acid receptor 1 (GPBAR1) (Oryctolagus cuniculus (Rabbit)).